Consider the following 270-residue polypeptide: 4-hydroxy-tetrahydrodipicolinate reductase (270 aa).

Residues 11–16 (GASGRM) and Glu-37 contribute to the NAD(+) site. Arg-38 is an NADP(+) binding site. NAD(+) contacts are provided by residues 101 to 103 (GTT) and 125 to 128 (APNM). His-158 functions as the Proton donor/acceptor in the catalytic mechanism. His-159 provides a ligand contact to (S)-2,3,4,5-tetrahydrodipicolinate. Lys-162 acts as the Proton donor in catalysis. Position 168-169 (168-169 (GT)) interacts with (S)-2,3,4,5-tetrahydrodipicolinate.

Belongs to the DapB family.

It localises to the cytoplasm. It carries out the reaction (S)-2,3,4,5-tetrahydrodipicolinate + NAD(+) + H2O = (2S,4S)-4-hydroxy-2,3,4,5-tetrahydrodipicolinate + NADH + H(+). The catalysed reaction is (S)-2,3,4,5-tetrahydrodipicolinate + NADP(+) + H2O = (2S,4S)-4-hydroxy-2,3,4,5-tetrahydrodipicolinate + NADPH + H(+). It participates in amino-acid biosynthesis; L-lysine biosynthesis via DAP pathway; (S)-tetrahydrodipicolinate from L-aspartate: step 4/4. Functionally, catalyzes the conversion of 4-hydroxy-tetrahydrodipicolinate (HTPA) to tetrahydrodipicolinate. This is 4-hydroxy-tetrahydrodipicolinate reductase from Shewanella frigidimarina (strain NCIMB 400).